The following is a 1396-amino-acid chain: Major capsid protein (1396 aa).

Belongs to the herpesviridae major capsid protein family. In terms of assembly, homomultimer. Makes the hexons and eleven out of twelve pentons. Interacts with triplex proteins 1/TRX1 and 2/TRX2; adjacent capsomers are linked together in groups of three by triplexes, heterotrimeric complexes composed of one molecule of TRX1 and two molecules of TRX2. Interacts with scaffold protein; this interaction allows efficient MCP transport to the host nucleus. Interacts with capsid vertex component 2/CVC2. Interacts with the small capsomere-interacting protein/SCP.

It is found in the virion. The protein localises to the host nucleus. Its function is as follows. Self-assembles to form an icosahedral capsid with a T=16 symmetry, about 200 nm in diameter, and consisting of 150 hexons and 12 pentons (total of 162 capsomers). Hexons form the edges and faces of the capsid and are each composed of six MCP molecules. In contrast, one penton is found at each of the 12 vertices. Eleven of the pentons are MCP pentamers, while the last vertex is occupied by the portal complex. The capsid is surrounded by a layer of proteinaceous material designated the tegument which, in turn, is enclosed in an envelope of host cell-derived lipids containing virus-encoded glycoproteins. This Varicella-zoster virus (strain Dumas) (HHV-3) protein is Major capsid protein.